A 377-amino-acid chain; its full sequence is Queuine tRNA-ribosyltransferase (377 aa).

Asp-93 functions as the Proton acceptor in the catalytic mechanism. Residues 93–97 (DSGGF), Asp-147, Gln-190, and Gly-216 contribute to the substrate site. Positions 247 to 253 (GVGTPDD) are RNA binding. Asp-266 serves as the catalytic Nucleophile. Residues 271 to 275 (TRAGR) form an RNA binding; important for wobble base 34 recognition region. Zn(2+) is bound by residues Cys-304, Cys-306, Cys-309, and His-335.

The protein belongs to the queuine tRNA-ribosyltransferase family. In terms of assembly, homodimer. Within each dimer, one monomer is responsible for RNA recognition and catalysis, while the other monomer binds to the replacement base PreQ1. Requires Zn(2+) as cofactor.

The enzyme catalyses 7-aminomethyl-7-carbaguanine + guanosine(34) in tRNA = 7-aminomethyl-7-carbaguanosine(34) in tRNA + guanine. Its pathway is tRNA modification; tRNA-queuosine biosynthesis. Catalyzes the base-exchange of a guanine (G) residue with the queuine precursor 7-aminomethyl-7-deazaguanine (PreQ1) at position 34 (anticodon wobble position) in tRNAs with GU(N) anticodons (tRNA-Asp, -Asn, -His and -Tyr). Catalysis occurs through a double-displacement mechanism. The nucleophile active site attacks the C1' of nucleotide 34 to detach the guanine base from the RNA, forming a covalent enzyme-RNA intermediate. The proton acceptor active site deprotonates the incoming PreQ1, allowing a nucleophilic attack on the C1' of the ribose to form the product. After dissociation, two additional enzymatic reactions on the tRNA convert PreQ1 to queuine (Q), resulting in the hypermodified nucleoside queuosine (7-(((4,5-cis-dihydroxy-2-cyclopenten-1-yl)amino)methyl)-7-deazaguanosine). The chain is Queuine tRNA-ribosyltransferase from Granulibacter bethesdensis (strain ATCC BAA-1260 / CGDNIH1).